The primary structure comprises 385 residues: S-type anion channel SLAH1 (385 aa).

Topologically, residues 1–42 are cytoplasmic; the sequence is MEIPRQEIHIEIDNSIPSSKEFKTGLADAKPVVLMSALRSLH. A helical membrane pass occupies residues 43-65; that stretch reads AGYFRISLSLCSQALLWKIMIAP. Residues 66-81 lie on the Extracellular side of the membrane; sequence ESPSMSHMHSKLPSMA. A helical transmembrane segment spans residues 82–102; that stretch reads FHLLWYLALVTQVSLCFLYAL. Residues 103–114 are Cytoplasmic-facing; sequence KCIFFFDKVKEE. The helical transmembrane segment at 115-135 threads the bilayer; it reads FLHYIGVNYLYAPSISWLLML. Over 136–150 the chain is Extracellular; sequence QSAPMMEPNSVLYQT. Residues 151 to 171 form a helical membrane-spanning segment; sequence LFWIFAVPVLTLDIKLYGQWF. Over 172–176 the chain is Cytoplasmic; the sequence is TTEKR. The chain crosses the membrane as a helical span at residues 177-197; the sequence is FLSMLANPASQVSVIANLVAA. Residues 198–207 are Extracellular-facing; that stretch reads RGAAEMGWNE. The helical transmembrane segment at 208–228 threads the bilayer; sequence CALCMFSLGMVHYLVIFVTLY. Topologically, residues 229-243 are cytoplasmic; sequence QRLPGGNNFPAKLRP. The chain crosses the membrane as a helical span at residues 244–264; sequence IFFLFVAAPAMASLAWNSICG. Residue Thr-265 is a topological domain, extracellular. A helical transmembrane segment spans residues 266–286; it reads FDAVAKMLFFLSLFIFMSLVC. Topologically, residues 287-299 are cytoplasmic; sequence RPNLFKKSMKRFN. The chain crosses the membrane as a helical span at residues 300–320; that stretch reads VAWWAYSFPLTFLALDSVQYA. Topologically, residues 321–330 are extracellular; that stretch reads QEVKDPVGSG. A helical transmembrane segment spans residues 331–351; sequence LMLIFSSISVLIFLGMMVLTA. At 352 to 385 the chain is on the cytoplasmic side; the sequence is ANSNRLLRHDPVLGSATDPKDKQKTLSLNATNQN. The tract at residues 366–385 is disordered; that stretch reads SATDPKDKQKTLSLNATNQN. Over residues 376–385 the composition is skewed to polar residues; it reads TLSLNATNQN.

The protein belongs to the SLAC1 S-type anion channel family. In terms of assembly, homotrimer. As to expression, expressed in the vascular systems of root.

Its subcellular location is the cell membrane. Slow, weak voltage-dependent S-type anion efflux channel involved in maintenance of anion homeostasis. The chain is S-type anion channel SLAH1 (SLAH1) from Arabidopsis thaliana (Mouse-ear cress).